We begin with the raw amino-acid sequence, 155 residues long: 2-C-methyl-D-erythritol 2,4-cyclodiphosphate synthase (155 aa).

Residues aspartate 10, histidine 12, and histidine 46 each contribute to the a divalent metal cation site. 4-CDP-2-C-methyl-D-erythritol 2-phosphate is bound at residue 10–12 (DSH). 4-CDP-2-C-methyl-D-erythritol 2-phosphate contacts are provided by residues 60–62 (DIG), 65–69 (FDEND), and lysine 140.

Belongs to the IspF family. In terms of assembly, homotrimer. Requires a divalent metal cation as cofactor.

The enzyme catalyses 4-CDP-2-C-methyl-D-erythritol 2-phosphate = 2-C-methyl-D-erythritol 2,4-cyclic diphosphate + CMP. It participates in isoprenoid biosynthesis; isopentenyl diphosphate biosynthesis via DXP pathway; isopentenyl diphosphate from 1-deoxy-D-xylulose 5-phosphate: step 4/6. Its function is as follows. Involved in the biosynthesis of isopentenyl diphosphate (IPP) and dimethylallyl diphosphate (DMAPP), two major building blocks of isoprenoid compounds. Catalyzes the conversion of 4-diphosphocytidyl-2-C-methyl-D-erythritol 2-phosphate (CDP-ME2P) to 2-C-methyl-D-erythritol 2,4-cyclodiphosphate (ME-CPP) with a corresponding release of cytidine 5-monophosphate (CMP). This chain is 2-C-methyl-D-erythritol 2,4-cyclodiphosphate synthase, found in Mycoplasmoides gallisepticum (strain R(low / passage 15 / clone 2)) (Mycoplasma gallisepticum).